A 396-amino-acid polypeptide reads, in one-letter code: MNKSYENSGRFGRFGGQYVPETVMTALMELEESFNKAKEDSKFIDEYMYYLQEYSGRPTPLYYAENLTKNLGGAKIYLKREDLNHTGAHKINNVLGQILLAKRMGKKKVIAETGAGQHGVAVATGAAMFQMECVIYMGEEDCRRQSLNVLRMKILGAKVVSVESGTKTLKDAVNEALRKWVENIEDTFYVMGSVVGPHPYPTMVRDFQRIIGDETKEQILKKEGKLPNYIIACVGGGSNSMGIFYPFVEDKSVKLIGVEAAGLGVDTDKHAASMAKGSVGVLHGMMTYLIQDDEGQILPVYSVSAGLDYPGVGPEHAYLKDTKRAEYTYVTDQEALDAFGYLSRCEGIIPALESSHALAYTMKLAPELSKEEIVVVNISGRGDKDVDTISELNIFG.

The residue at position 90 (lysine 90) is an N6-(pyridoxal phosphate)lysine.

The protein belongs to the TrpB family. In terms of assembly, tetramer of two alpha and two beta chains. Pyridoxal 5'-phosphate is required as a cofactor.

It carries out the reaction (1S,2R)-1-C-(indol-3-yl)glycerol 3-phosphate + L-serine = D-glyceraldehyde 3-phosphate + L-tryptophan + H2O. It participates in amino-acid biosynthesis; L-tryptophan biosynthesis; L-tryptophan from chorismate: step 5/5. In terms of biological role, the beta subunit is responsible for the synthesis of L-tryptophan from indole and L-serine. In Clostridium kluyveri (strain NBRC 12016), this protein is Tryptophan synthase beta chain.